A 248-amino-acid polypeptide reads, in one-letter code: Large ribosomal subunit protein uL30 (248 aa).

Methionine 1 carries the N-acetylmethionine modification. 4 tandem repeats follow at residues 7–18 (KKKEVPAVPETL), 19–30 (KKKRRNFAELKI), 31–42 (KRLRKKFAQKML), and 43–54 (RKARRKLIYEKA). Residues 7–54 (KKKEVPAVPETLKKKRRNFAELKIKRLRKKFAQKMLRKARRKLIYEKA) form a 4 X 12 AA tandem repeats region. Phosphothreonine is present on threonine 17. Lysine 124 bears the N6-acetyllysine mark. Lysine 127 carries the post-translational modification N6-succinyllysine. Tyrosine 139 carries the phosphotyrosine modification.

The protein belongs to the universal ribosomal protein uL30 family. Component of the large ribosomal subunit. Homodimer. Interacts with DHX33.

It localises to the cytoplasm. Its function is as follows. Component of the large ribosomal subunit. The ribosome is a large ribonucleoprotein complex responsible for the synthesis of proteins in the cell. Binds to G-rich structures in 28S rRNA and in mRNAs. Plays a regulatory role in the translation apparatus; inhibits cell-free translation of mRNAs. The sequence is that of Large ribosomal subunit protein uL30 (RPL7) from Homo sapiens (Human).